The sequence spans 238 residues: Ribosomal RNA small subunit methyltransferase G (238 aa).

S-adenosyl-L-methionine is bound by residues Gly-99, Leu-104, 122-124 (DAT), 150-151 (VE), and Arg-164.

Belongs to the methyltransferase superfamily. RNA methyltransferase RsmG family.

It localises to the cytoplasm. Its function is as follows. Specifically methylates the N7 position of a guanine in 16S rRNA. This chain is Ribosomal RNA small subunit methyltransferase G, found in Chlorobium luteolum (strain DSM 273 / BCRC 81028 / 2530) (Pelodictyon luteolum).